The following is a 177-amino-acid chain: SPbeta prophage-derived uncharacterized N-acetyltransferase YokL (177 aa).

The region spanning 11 to 170 (LTLRAIQPED…DGICFGMTRE (160 aa)) is the N-acetyltransferase domain.

It belongs to the acetyltransferase family.

In Bacillus subtilis (strain 168), this protein is SPbeta prophage-derived uncharacterized N-acetyltransferase YokL (yokL).